Reading from the N-terminus, the 419-residue chain is Hyaluronan synthase (419 aa).

Transmembrane regions (helical) follow at residues 8–28 (LIVL…MYLF), 33–53 (VGIY…LSFL), 318–338 (IVAL…VAIG), 345–365 (AIQL…IVAL), and 376–396 (PASF…LQPL).

This sequence belongs to the NodC/HAS family. Mg(2+) serves as cofactor.

It localises to the cell membrane. The enzyme catalyses [hyaluronan](n) + UDP-N-acetyl-alpha-D-glucosamine = N-acetyl-beta-D-glucosaminyl-(1-&gt;4)-[hyaluronan](n) + UDP + H(+). It carries out the reaction N-acetyl-beta-D-glucosaminyl-(1-&gt;4)-[hyaluronan](n) + UDP-alpha-D-glucuronate = [hyaluronan](n+1) + UDP + H(+). Its pathway is glycan biosynthesis; hyaluronan biosynthesis. In terms of biological role, glycosaminoglycan synthesis. The hyaluronic acid capsule is involved in the pathogenicity of group A Streptococci; it may be the major virulence determinant. This is Hyaluronan synthase (hasA) from Streptococcus pyogenes serotype M6 (strain ATCC BAA-946 / MGAS10394).